Consider the following 360-residue polypeptide: uncharacterized protein (360 aa).

This is an uncharacterized protein from Ostreid herpesvirus 1 (isolate France) (OsHV-1).